The primary structure comprises 559 residues: Potassium-transporting ATPase potassium-binding subunit (559 aa).

The next 12 membrane-spanning stretches (helical) occupy residues 5–25 (GFLL…PLGM), 63–83 (LLAI…LLML), 131–151 (VGLT…VFAL), 173–193 (ITLW…IQQG), 254–274 (VQML…GEVV), 282–302 (AILW…MWAE), 327–347 (FGIL…CGAV), 356–376 (ALGG…FGGV), 379–399 (GLYG…LMVG), 416–436 (MIAL…ALAM), 483–503 (LLLA…VMAI), and 525–545 (ALFI…TFIP).

Belongs to the KdpA family. As to quaternary structure, the system is composed of three essential subunits: KdpA, KdpB and KdpC.

Its subcellular location is the cell inner membrane. Functionally, part of the high-affinity ATP-driven potassium transport (or Kdp) system, which catalyzes the hydrolysis of ATP coupled with the electrogenic transport of potassium into the cytoplasm. This subunit binds the periplasmic potassium ions and delivers the ions to the membrane domain of KdpB through an intramembrane tunnel. The polypeptide is Potassium-transporting ATPase potassium-binding subunit (Klebsiella pneumoniae subsp. pneumoniae (strain ATCC 700721 / MGH 78578)).